A 176-amino-acid polypeptide reads, in one-letter code: MAAPVLLRVSVPRWERVARYAVCAAGILLSIYAYHVEREKERDPEHRALCDLGPWVKCSAALASRWGRGFGLLGSIFGKDGVLNQPNSVFGLIFYILQLLLGMTASAVAALVLMTSSIVSVVGSLYLAYILYFVLKEFCIICVTTYVLNFLLLIINYKRLVYLNEAWKRQLQPKED.

Residues 1–13 (MAAPVLLRVSVPR) lie on the Cytoplasmic side of the membrane. Residues 14–36 (WERVARYAVCAAGILLSIYAYHV) traverse the membrane as a helical segment. The Lumenal segment spans residues 37–87 (EREKERDPEHRALCDLGPWVKCSAALASRWGRGFGLLGSIFGKDGVLNQPN). A disulfide bond links Cys50 and Cys58. (S)-warfarin is bound at residue Asn87. Residues 88-102 (SVFGLIFYILQLLLG) traverse the membrane as a helical segment. Over 103-107 (MTASA) the chain is Cytoplasmic. Residues 108–135 (VAALVLMTSSIVSVVGSLYLAYILYFVL) form a helical membrane-spanning segment. The Lumenal segment spans residues 136-138 (KEF). Cys139 and Cys142 are joined by a disulfide. The helical transmembrane segment at 139-160 (CIICVTTYVLNFLLLIINYKRL) threads the bilayer. Phylloquinone contacts are provided by Cys142 and Tyr146. Residue Tyr146 participates in (S)-warfarin binding. Residues 161 to 176 (VYLNEAWKRQLQPKED) lie on the Cytoplasmic side of the membrane.

The protein belongs to the VKOR family. As to expression, detected in testis and lung.

It localises to the endoplasmic reticulum membrane. It catalyses the reaction phylloquinone + [protein]-disulfide + H2O = 2,3-epoxyphylloquinone + [protein]-dithiol. The catalysed reaction is phylloquinol + [protein]-disulfide = phylloquinone + [protein]-dithiol. With respect to regulation, inhibited by warfarin (coumadin). Warfarin locks VKORC1 in both redox states into the closed conformation. Involved in vitamin K metabolism. Can reduce inactive vitamin K 2,3-epoxide to active vitamin K, and may contribute to vitamin K-mediated protection against oxidative stress. Plays a role in vitamin K-dependent gamma-carboxylation of Glu residues in target proteins. This chain is Vitamin K epoxide reductase complex subunit 1-like protein 1 (Vkorc1l1), found in Mus musculus (Mouse).